A 924-amino-acid polypeptide reads, in one-letter code: MKFLILLFNILCLFPVLAADNHGVGPQGASGVDPITFDINSNQTGPAFLTAVEMAGVKYLQVQHGSNVNIHRLVEGNVVIWENASTPLYTGAIVTNNDGPYMAYVEVLGDPNLQFFIKSGDAWVTLSEHEYLAKLQEIRQAVHIESVFSLNMAFQLENNKYEVETHAKNGANMVTFIPRNGHICKMVYHKNVRIYKATGNDTVTSVVGFFRGLRLLLINVFSIDDNGMMSNRYFQHVDDKYVPISQKNYETGIVKLKDYKHAYHPVDLDIKDIDYTMFHLADATYHEPCFKIIPNTGFCITKLFDGDQVLYESFNPLIHCINEVHIYDRNNGSIICLHLNYSPPSYKAYLVLKDTGWEATTHPLLEEKIEELQDQRACELDVNFISDKDLYVAALTNADLNYTMVTPRPHRDVIRVSDGSEVLWYYEGLDNFLVCAWIYVSDGVASLVHLRIKDRIPANNDIYVLKGDLYWTRITKIQFTQEIKRLVKKSKKKLAPITEEDSDKHDEPPEGPGASGLPPKAPGDKEGSEGHKGPSKGSDSSKEGKKPGSGKKPGPAREHKPSKIPTLSKKPSGPKDPKHPRDPKEPRKSKSPRTASPTRRPSPKLPQLSKLPKSTSPRSPPPPTRPSSPERPEGTKIIKTSKPPSPKPPFDPSFKEKFYDDYSKAASRSKETKTTVVLDESFESILKETLPETPGTPFTTPRPVPPKRPRTPESPFEPPKDPDSPSTSPSEFFTPPESKRTRFHETPADTPLPDVTAELFKEPDVTAETKSPDEAMKRPRSPSEYEDTSPGDYPSLPMKRHRLERLRLTTTEMETDPGRMAKDASGKPVKLKRSKSFDDLTTVELAPEPKASRIVVDDEGTEADDEETHPPEERQKTEVRRRRPPKKPSKSPRPSKPKKPKKPDSAYIPSILAILVVSLIVGIL.

Positions 1–19 (MKFLILLFNILCLFPVLAA) are cleaved as a signal peptide. Residues 490-907 (SKKKLAPITE…KKPKKPDSAY (418 aa)) are disordered. 2 stretches are compositionally biased toward basic and acidic residues: residues 522 to 532 (PGDKEGSEGHK) and 573 to 588 (GPKD…EPRK). The segment covering 592–617 (PRTASPTRRPSPKLPQLSKLPKSTSP) has biased composition (low complexity). Positions 653-673 (SFKEKFYDDYSKAASRSKETK) are enriched in basic and acidic residues. A compositionally biased stretch (low complexity) spans 724-736 (SPSTSPSEFFTPP). 3 stretches are compositionally biased toward basic and acidic residues: residues 737–747 (ESKRTRFHETP), 770–783 (KSPD…RSPS), and 816–825 (DPGRMAKDAS). Positions 857-867 (DDEGTEADDEE) are enriched in acidic residues. Over residues 868-878 (THPPEERQKTE) the composition is skewed to basic and acidic residues. Over residues 879 to 901 (VRRRRPPKKPSKSPRPSKPKKPK) the composition is skewed to basic residues. A lipid anchor (GPI-anchor amidated aspartate) is attached at Asp-904. Residues 905–924 (SAYIPSILAILVVSLIVGIL) constitute a propeptide, removed in mature form.

It localises to the cell membrane. The polypeptide is 104 kDa microneme/rhoptry antigen (Theileria parva (East coast fever infection agent)).